Here is a 465-residue protein sequence, read N- to C-terminus: Eukaryotic translation initiation factor 3 subunit M (465 aa).

One can recognise a PCI domain in the interval 215-383 (EEMSYNHVIL…GEFLVHRATY (169 aa)). A disordered region spans residues 429–465 (AAAESGREGGARGGAGERRRGGGGHQGPREVDLVGGD). 2 stretches are compositionally biased toward basic and acidic residues: residues 433-448 (SGRE…ERRR) and 455-465 (GPREVDLVGGD).

The protein belongs to the eIF-3 subunit M family. In terms of assembly, component of the eukaryotic translation initiation factor 3 (eIF-3) complex.

It localises to the cytoplasm. Component of the eukaryotic translation initiation factor 3 (eIF-3) complex, which is involved in protein synthesis of a specialized repertoire of mRNAs and, together with other initiation factors, stimulates binding of mRNA and methionyl-tRNAi to the 40S ribosome. The eIF-3 complex specifically targets and initiates translation of a subset of mRNAs involved in cell proliferation. The chain is Eukaryotic translation initiation factor 3 subunit M from Coccidioides immitis (strain RS) (Valley fever fungus).